A 273-amino-acid polypeptide reads, in one-letter code: Putative phosphoenolpyruvate synthase regulatory protein (273 aa).

ADP is bound at residue 153–160 (GVSRCGKT).

The protein belongs to the pyruvate, phosphate/water dikinase regulatory protein family. PSRP subfamily.

It catalyses the reaction [pyruvate, water dikinase] + ADP = [pyruvate, water dikinase]-phosphate + AMP + H(+). The catalysed reaction is [pyruvate, water dikinase]-phosphate + phosphate + H(+) = [pyruvate, water dikinase] + diphosphate. Functionally, bifunctional serine/threonine kinase and phosphorylase involved in the regulation of the phosphoenolpyruvate synthase (PEPS) by catalyzing its phosphorylation/dephosphorylation. This is Putative phosphoenolpyruvate synthase regulatory protein from Sodalis glossinidius (strain morsitans).